Reading from the N-terminus, the 1145-residue chain is Cellulose synthase-like protein D3 (1145 aa).

Positions 1-19 (MASNNHFMNSRSNLSTNSD) are enriched in polar residues. Disordered regions lie at residues 1-38 (MASNNHFMNSRSNLSTNSDAAEAERHQQPVSNSVTFAR) and 189-208 (DNNKQQRPMLPPPAGGSKMD). The next 2 helical transmembrane spans lie at 289–309 (VISPYRLLILIRIVVLALFLM) and 319–339 (AIWLWGMSVVCELWFALSWLL). Asp-419 is a catalytic residue. Residue Ser-755 is modified to Phosphoserine. Asp-848 is an active-site residue. Helical transmembrane passes span 930–950 (FFLIVYCFLPALSLFSGQFIV), 956–976 (TFLVYLLIISITLCLLALLEI), 1002–1022 (LAAVIQGLLKVVAGIEISFTL), 1045–1065 (SLMIPPITIMMVNLIAIAVGF), 1079–1099 (LIGGVFFSFWVLAHLYPFAKG), and 1109–1129 (TIVYVWSGLVAITISLLWVAI).

It belongs to the glycosyltransferase 2 family. Plant cellulose synthase-like D subfamily. As to expression, preferentially expressed in root hair cells. Expressed in roots, leaves, stems, flowers and siliques.

It localises to the golgi apparatus membrane. Thought to be a Golgi-localized beta-glycan synthase that polymerize the backbones of noncellulosic polysaccharides (hemicelluloses) of plant cell wall. Required for synthesis of a cell wall polysaccharide essential for root hair elongation, but not initiation. May be the functional ortholog of rice CSLD1. This chain is Cellulose synthase-like protein D3 (CSLD3), found in Arabidopsis thaliana (Mouse-ear cress).